Reading from the N-terminus, the 187-residue chain is UPF0398 protein SH1465 (187 aa).

The protein belongs to the UPF0398 family.

The sequence is that of UPF0398 protein SH1465 from Staphylococcus haemolyticus (strain JCSC1435).